We begin with the raw amino-acid sequence, 124 residues long: Large ribosomal subunit protein bL12 (124 aa).

This sequence belongs to the bacterial ribosomal protein bL12 family. In terms of assembly, homodimer. Part of the ribosomal stalk of the 50S ribosomal subunit. Forms a multimeric L10(L12)X complex, where L10 forms an elongated spine to which 2 to 4 L12 dimers bind in a sequential fashion. Binds GTP-bound translation factors.

In terms of biological role, forms part of the ribosomal stalk which helps the ribosome interact with GTP-bound translation factors. Is thus essential for accurate translation. The polypeptide is Large ribosomal subunit protein bL12 (Janthinobacterium sp. (strain Marseille) (Minibacterium massiliensis)).